A 519-amino-acid polypeptide reads, in one-letter code: tRNA-2-methylthio-N(6)-dimethylallyladenosine synthase (519 aa).

The interval 1-23 (MNEQQRKQQSQIRTEQANVDRIK) is disordered. The span at 7–17 (KQQSQIRTEQA) shows a compositional bias: polar residues. Residues 76–194 (KKFLIRTYGC…LPHLVKEALF (119 aa)) enclose the MTTase N-terminal domain. Residues Cys-85, Cys-121, Cys-155, Cys-231, Cys-235, and Cys-238 each contribute to the [4Fe-4S] cluster site. The Radical SAM core domain occupies 217–450 (RKGKIKAWVN…VNKQSAASMK (234 aa)). The TRAM domain maps to 450–513 (KDYAGKKVKV…TWSLNGVMVE (64 aa)).

It belongs to the methylthiotransferase family. MiaB subfamily. As to quaternary structure, monomer. Requires [4Fe-4S] cluster as cofactor.

It localises to the cytoplasm. The enzyme catalyses N(6)-dimethylallyladenosine(37) in tRNA + (sulfur carrier)-SH + AH2 + 2 S-adenosyl-L-methionine = 2-methylsulfanyl-N(6)-dimethylallyladenosine(37) in tRNA + (sulfur carrier)-H + 5'-deoxyadenosine + L-methionine + A + S-adenosyl-L-homocysteine + 2 H(+). In terms of biological role, catalyzes the methylthiolation of N6-(dimethylallyl)adenosine (i(6)A), leading to the formation of 2-methylthio-N6-(dimethylallyl)adenosine (ms(2)i(6)A) at position 37 in tRNAs that read codons beginning with uridine. This chain is tRNA-2-methylthio-N(6)-dimethylallyladenosine synthase, found in Oceanobacillus iheyensis (strain DSM 14371 / CIP 107618 / JCM 11309 / KCTC 3954 / HTE831).